We begin with the raw amino-acid sequence, 255 residues long: 4-diphosphocytidyl-2-C-methyl-D-erythritol kinase (255 aa).

K6 is an active-site residue. Residue 95-105 (PVCAGLGGGSS) participates in ATP binding. The active site involves D137.

This sequence belongs to the GHMP kinase family. IspE subfamily.

The enzyme catalyses 4-CDP-2-C-methyl-D-erythritol + ATP = 4-CDP-2-C-methyl-D-erythritol 2-phosphate + ADP + H(+). It functions in the pathway isoprenoid biosynthesis; isopentenyl diphosphate biosynthesis via DXP pathway; isopentenyl diphosphate from 1-deoxy-D-xylulose 5-phosphate: step 3/6. Functionally, catalyzes the phosphorylation of the position 2 hydroxy group of 4-diphosphocytidyl-2C-methyl-D-erythritol. The polypeptide is 4-diphosphocytidyl-2-C-methyl-D-erythritol kinase (Campylobacter jejuni subsp. jejuni serotype O:2 (strain ATCC 700819 / NCTC 11168)).